The chain runs to 481 residues: GTPase Obg (481 aa).

Residues 2-159 form the Obg domain; sequence TTFVDRVVLH…IDVVLELKSV (158 aa). One can recognise an OBG-type G domain in the interval 160–330; the sequence is ADVGLVGYPS…LMYAMGELVT (171 aa). GTP-binding positions include 166–173, 191–195, 212–215, 282–285, and 311–313; these read GYPSAGKS, FTTLV, DVPG, NKVD, and SAA. Mg(2+)-binding residues include serine 173 and threonine 193. The region spanning 348 to 426 is the OCT domain; it reads PKAVDDAGFT…IGEREFDWQP (79 aa). A compositionally biased stretch (basic and acidic residues) spans 439 to 452; the sequence is GDQRLAEKSERPSA. Residues 439 to 481 are disordered; sequence GDQRLAEKSERPSATERLAARKARRQRPEDEAEADEPVGDGEE. Over residues 468–481 the composition is skewed to acidic residues; sequence DEAEADEPVGDGEE.

It belongs to the TRAFAC class OBG-HflX-like GTPase superfamily. OBG GTPase family. As to quaternary structure, monomer. It depends on Mg(2+) as a cofactor.

Its subcellular location is the cytoplasm. An essential GTPase which binds GTP, GDP and possibly (p)ppGpp with moderate affinity, with high nucleotide exchange rates and a fairly low GTP hydrolysis rate. Plays a role in control of the cell cycle, stress response, ribosome biogenesis and in those bacteria that undergo differentiation, in morphogenesis control. This chain is GTPase Obg, found in Salinispora tropica (strain ATCC BAA-916 / DSM 44818 / JCM 13857 / NBRC 105044 / CNB-440).